The chain runs to 445 residues: MMEESGIETTPPGTPPPNPAGLAATAMSSTPVPLAATSSFSSPNVSSMESFPPLAYSTPQPPLPPVRPSAPLPFVPPPAVPSVPPLVTSMPPPVSPSTAAAFGNPPVSHFPPSTSAPNTLLPAPPSGPPISGFSVGSTYDITRGHAGRAPQTPLMPSFSAPSGTGLLPTPITQQASLTSLAQGTGTTSAITFPEEQEDPRITRGQDEASAGGIWGFIKGVAGNPMVKSVLDKTKHSVESMITTLDPGMAPYIKSGGELDIVVTSNKEVKVAAVRDAFQEVFGLAVVVGEAGQSNIAPQPVGYAAGLKGAQERIDSLRRTGVIHEKQTAVSVENFIAELLPDKWFDIGCLVVEDPVHGIHLETFTQATPVPLEFVQQAQSLTPQDYNLRWSGLLVTVGEVLEKSLLNVSRTDWHMAFTGMSRRQMIYSAARAIAGMYKQRLPPRTV.

2 disordered regions span residues 1 to 71 and 105 to 167; these read MMEE…PSAP and PPVS…TGLL. A compositionally biased stretch (polar residues) spans 27–49; it reads MSSTPVPLAATSSFSSPNVSSME. The segment covering 59–71 has biased composition (pro residues); sequence PQPPLPPVRPSAP. Phosphoserine occurs at positions 209 and 408.

This sequence belongs to the PRRC1 family. In terms of assembly, interacts with PRKAR1A; resulting in PKA activation. Ubiquitously expressed with higher expression in kidney, liver and placenta. Detected in embryonic kidney cells (HEK293 cells) (at protein level). In terms of tissue distribution, specifically expressed in liver.

The protein localises to the golgi apparatus. It is found in the cytoplasm. Its function is as follows. May act as a regulator of the protein kinase A (PKA) activity during embryonic development. The sequence is that of Protein PRRC1 (PRRC1) from Homo sapiens (Human).